Consider the following 481-residue polypeptide: Protein nucleotidyltransferase YdiU (481 aa).

Positions 85, 87, 88, 108, 120, 121, 172, and 179 each coordinate ATP. The Proton acceptor role is filled by aspartate 248. Mg(2+) is bound by residues asparagine 249 and aspartate 258. Aspartate 258 contacts ATP.

Belongs to the SELO family. The cofactor is Mg(2+). Mn(2+) serves as cofactor.

The enzyme catalyses L-seryl-[protein] + ATP = 3-O-(5'-adenylyl)-L-seryl-[protein] + diphosphate. It carries out the reaction L-threonyl-[protein] + ATP = 3-O-(5'-adenylyl)-L-threonyl-[protein] + diphosphate. It catalyses the reaction L-tyrosyl-[protein] + ATP = O-(5'-adenylyl)-L-tyrosyl-[protein] + diphosphate. The catalysed reaction is L-histidyl-[protein] + UTP = N(tele)-(5'-uridylyl)-L-histidyl-[protein] + diphosphate. The enzyme catalyses L-seryl-[protein] + UTP = O-(5'-uridylyl)-L-seryl-[protein] + diphosphate. It carries out the reaction L-tyrosyl-[protein] + UTP = O-(5'-uridylyl)-L-tyrosyl-[protein] + diphosphate. Functionally, nucleotidyltransferase involved in the post-translational modification of proteins. It can catalyze the addition of adenosine monophosphate (AMP) or uridine monophosphate (UMP) to a protein, resulting in modifications known as AMPylation and UMPylation. The chain is Protein nucleotidyltransferase YdiU from Cereibacter sphaeroides (strain KD131 / KCTC 12085) (Rhodobacter sphaeroides).